The primary structure comprises 279 residues: MGQKISGGVKTVSRNDSQSTFKPIIPRELQADFVKPARIDILLDMPPASRDLQLKHSWNSEDRSLNIFVKEDDKLTFHRHPVAQSTDCIRGKVGLTKGLHIWEIYWPTRQRGTHAVVGVCTADAPLHSVGYQSLVGSTEQSWGWDLGRNKLYHDSKNCAGVTYPAILKNDEAFLVPDKFLVALDMDEGTLSFIVDQQYLGIAFRGLRGKKLYPIVSAVWGHCEITMRYIGGLDPEPLPLMDLCRRTIRQKIGRTNLEEHIQQLQLPLSMKTYLLYKNRR.

A B30.2/SPRY domain is found at 36–233 (PARIDILLDM…ITMRYIGGLD (198 aa)). Positions 234–279 (PEPLPLMDLCRRTIRQKIGRTNLEEHIQQLQLPLSMKTYLLYKNRR) constitute an SOCS box domain. Residues 236–279 (PLPLMDLCRRTIRQKIGRTNLEEHIQQLQLPLSMKTYLLYKNRR) are involved in binding to the Elongin BC complex.

Belongs to the SPSB family. In terms of assembly, interacts (via B30.2/SPRY domain) with vas; this interaction may be necessary for the transport of vas to the posterior pole of the oocyte. Interacts with Cul-5. May associate with the Elongin BC complex composed of Elongin-B and Elongin-C. As to expression, expressed in ovaries, primarily in nurse cells and oocytes (at protein level).

The protein resides in the cytoplasm. Its subcellular location is the nucleus. Its function is as follows. Involved in the localization of vas to the posterior pole of the oocyte. Required maternally in the germ line for efficient primordial germ cell formation. The sequence is that of Protein gustavus (gus) from Drosophila melanogaster (Fruit fly).